A 152-amino-acid polypeptide reads, in one-letter code: Large ribosomal subunit protein bL9 (152 aa).

It belongs to the bacterial ribosomal protein bL9 family.

Binds to the 23S rRNA. This is Large ribosomal subunit protein bL9 from Synechococcus elongatus (strain ATCC 33912 / PCC 7942 / FACHB-805) (Anacystis nidulans R2).